Here is a 247-residue protein sequence, read N- to C-terminus: F-box and leucine-rich protein 22 (247 aa).

Residues 6–52 (TMHITQLNRECLLHLFSFLDKDSRKSLARTCSQLHDVFEDPALWSLL) enclose the F-box domain. Disordered regions lie at residues 124 to 154 (SPRRREAPAPSSGTPIAVGPKSPRWGGPDHS) and 173 to 247 (GLGS…AFPQ). The span at 184 to 200 (ETPPAPGVSWGPPPPGA) shows a compositional bias: pro residues.

As to quaternary structure, directly interacts with SKP1 and CUL1. Enriched in cardiac muscle.

It localises to the cytoplasm. The protein resides in the myofibril. It is found in the sarcomere. Its subcellular location is the z line. It participates in protein modification; protein ubiquitination. Functionally, substrate-recognition component of the SCF (SKP1-CUL1-F-box protein)-type E3 ubiquitin ligase complex. Promotes ubiquitination of sarcomeric proteins alpha-actinin-2 (ACTN2) and filamin-C (FLNC). This Homo sapiens (Human) protein is F-box and leucine-rich protein 22 (FBXL22).